The primary structure comprises 633 residues: Probable potassium transport system protein Kup (633 aa).

Helical transmembrane passes span 21–41 (LAVGSVGVVYGDIGTSPLYAF), 61–81 (LVSLMFWALTIIVTMKYVLFL), 107–127 (TAVLMLLGLLGAALFLGDAMI), 145–165 (PTLSDYIVPISVAILALLFAI), 176–196 (FFGPITAIWFIVMGLAGIMHI), 219–239 (GFLGVVVLGAVFLTVTGAEAL), 255–275 (WFVLVFPSLTLNYLGQGALVL), 293–313 (ALLPVVILATMATIIASQAVI), 345–365 (IFLPSVNAILFFGVIFLVLSF), 371–391 (LATAYGISVTGAMVVTSIMAF), 402–422 (LPMAIAVLTPLLLLEFVFLGA), and 427–447 (IHDGGYVPVLIATAFTVIMWT).

This sequence belongs to the HAK/KUP transporter (TC 2.A.72) family.

Its subcellular location is the cell inner membrane. The enzyme catalyses K(+)(in) + H(+)(in) = K(+)(out) + H(+)(out). Functionally, transport of potassium into the cell. Likely operates as a K(+):H(+) symporter. The polypeptide is Probable potassium transport system protein Kup (Rhizobium rhizogenes (strain K84 / ATCC BAA-868) (Agrobacterium radiobacter)).